A 1286-amino-acid polypeptide reads, in one-letter code: ABC transporter B family member 4 (1286 aa).

A disordered region spans residues 1 to 39 (MASESGLNGDPNILEEVSETKRDKEEEEEVKKTEKKDEE). Residues 18–39 (SETKRDKEEEEEVKKTEKKDEE) show a composition bias toward basic and acidic residues. The chain crosses the membrane as a helical span at residues 60-80 (FLLMILGTLGSIGNGLGFPLM). Residues 63-349 (MILGTLGSIG…TSPCLSAFAA (287 aa)) form the ABC transmembrane type-1 1 domain. N-linked (GlcNAc...) asparagine glycans are attached at residues asparagine 94 and asparagine 97. Helical transmembrane passes span 109-129 (FVWLGIGTFAAAFLQLSGWMI), 186-206 (IQLLATFVGGFVIAFVRGWLL), 208-228 (LVMLSSIPLLVMAGALLAIVI), 288-308 (GLGLGTLFLVVFCSYALAVWY), and 317-337 (GYTGGQVLNIIIAVLTGSMSL). Positions 384 to 620 (IELKDVYFTY…PEGAYSQLIR (237 aa)) constitute an ABC transporter 1 domain. 419–426 (GQSGSGKS) contacts ATP. 2 N-linked (GlcNAc...) asparagine glycosylation sites follow: asparagine 500 and asparagine 571. The span at 625 to 636 (KKSDENAAEEQK) shows a compositional bias: basic and acidic residues. Residues 625–669 (KKSDENAAEEQKMSSIESFKQSSLRKSSLGRSLSKGGSSRGNSSR) are disordered. Residues 646–669 (SSLRKSSLGRSLSKGGSSRGNSSR) show a composition bias toward low complexity. A glycan (N-linked (GlcNAc...) asparagine) is linked at asparagine 666. At serine 671 the chain carries Phosphoserine. An ABC transmembrane type-1 2 domain is found at 720–1007 (LILGSISAAA…SSSLSPDSSK (288 aa)). The next 2 membrane-spanning stretches (helical) occupy residues 721–741 (ILGSISAAANGVILPIFGILI) and 764–784 (IIFMVLGFASIIAYPAQTFFF). N-linked (GlcNAc...) asparagine glycosylation is found at asparagine 816 and asparagine 846. Transmembrane regions (helical) follow at residues 850–870 (ILAGLIIAFLACWQLAFVVLA), 871–891 (MLPLIALNGFLYMKFMKGFSA), 942–962 (GIVSGIGFGFSFFVLFSSYAA), and 976–996 (TTFDSVFRVFFALTMAAMAIS). One can recognise an ABC transporter 2 domain in the interval 1042–1279 (IELRHVSFKY…KDGVYASLVQ (238 aa)). 1077–1084 (GESGSGKS) contributes to the ATP binding site. N-linked (GlcNAc...) asparagine glycosylation is found at asparagine 1131 and asparagine 1230.

The protein belongs to the ABC transporter superfamily. ABCB family. Multidrug resistance exporter (TC 3.A.1.201) subfamily. Interacts with 1-naphthylphthalamic acid (NPA). Phosphorylation level varies significantly during early response to bacterial elicitor. Mostly expressed in roots, especially in the root elongation zone and lateral roots. In mature portion of the root, expressed in the epidermis and cortex. In the root elongation zone, confined to epidermis. In root tips, present in the root cap, S3 columella and epidermal cells.

It localises to the cell membrane. In terms of biological role, auxin influx transporter that mediates the transport of auxin in roots. Contributes to the basipetal transport in hypocotyls and root tips by establishing an auxin uptake sink in the root cap. Confers sensitivity to 1-N-naphthylphthalamic acid (NPA). Regulates the root elongation, the initiation of lateral roots and the development of root hairs. Can transport IAA, indole-3-propionic acid, NPA syringic acid, vanillic acid and some auxin metabolites, but not 2,4-D and 1-naphthaleneacetic acid. The chain is ABC transporter B family member 4 (ABCB4) from Arabidopsis thaliana (Mouse-ear cress).